A 119-amino-acid polypeptide reads, in one-letter code: Large ribosomal subunit protein uL22 (119 aa).

This sequence belongs to the universal ribosomal protein uL22 family. Part of the 50S ribosomal subunit.

Functionally, this protein binds specifically to 23S rRNA; its binding is stimulated by other ribosomal proteins, e.g. L4, L17, and L20. It is important during the early stages of 50S assembly. It makes multiple contacts with different domains of the 23S rRNA in the assembled 50S subunit and ribosome. Its function is as follows. The globular domain of the protein is located near the polypeptide exit tunnel on the outside of the subunit, while an extended beta-hairpin is found that lines the wall of the exit tunnel in the center of the 70S ribosome. In Bifidobacterium longum (strain DJO10A), this protein is Large ribosomal subunit protein uL22.